Here is a 100-residue protein sequence, read N- to C-terminus: Small ribosomal subunit protein uS14 (100 aa).

The protein belongs to the universal ribosomal protein uS14 family. In terms of assembly, part of the 30S ribosomal subunit. Contacts proteins S3 and S10.

In terms of biological role, binds 16S rRNA, required for the assembly of 30S particles and may also be responsible for determining the conformation of the 16S rRNA at the A site. The sequence is that of Small ribosomal subunit protein uS14 from Picosynechococcus sp. (strain ATCC 27264 / PCC 7002 / PR-6) (Agmenellum quadruplicatum).